An 860-amino-acid chain; its full sequence is Probable leucine--tRNA ligase, cytoplasmic (860 aa).

The 'HIGH' region signature appears at P41–H51. The 'KMSKS' region motif lies at K552–S556. K555 contacts ATP.

It belongs to the class-I aminoacyl-tRNA synthetase family.

The protein localises to the cytoplasm. The catalysed reaction is tRNA(Leu) + L-leucine + ATP = L-leucyl-tRNA(Leu) + AMP + diphosphate. This Enterocytozoon bieneusi (strain H348) (Microsporidian parasite) protein is Probable leucine--tRNA ligase, cytoplasmic.